We begin with the raw amino-acid sequence, 158 residues long: 2-C-methyl-D-erythritol 2,4-cyclodiphosphate synthase (158 aa).

Residues aspartate 8 and histidine 10 each contribute to the a divalent metal cation site. Residues 8–10 (DSH) and 34–35 (HS) contribute to the 4-CDP-2-C-methyl-D-erythritol 2-phosphate site. Histidine 42 provides a ligand contact to a divalent metal cation. 4-CDP-2-C-methyl-D-erythritol 2-phosphate-binding positions include 56–58 (DIG), 61–65 (FPDND), and arginine 142.

The protein belongs to the IspF family. Homotrimer. A divalent metal cation serves as cofactor.

The enzyme catalyses 4-CDP-2-C-methyl-D-erythritol 2-phosphate = 2-C-methyl-D-erythritol 2,4-cyclic diphosphate + CMP. It participates in isoprenoid biosynthesis; isopentenyl diphosphate biosynthesis via DXP pathway; isopentenyl diphosphate from 1-deoxy-D-xylulose 5-phosphate: step 4/6. In terms of biological role, involved in the biosynthesis of isopentenyl diphosphate (IPP) and dimethylallyl diphosphate (DMAPP), two major building blocks of isoprenoid compounds. Catalyzes the conversion of 4-diphosphocytidyl-2-C-methyl-D-erythritol 2-phosphate (CDP-ME2P) to 2-C-methyl-D-erythritol 2,4-cyclodiphosphate (ME-CPP) with a corresponding release of cytidine 5-monophosphate (CMP). This is 2-C-methyl-D-erythritol 2,4-cyclodiphosphate synthase from Brachyspira hyodysenteriae (strain ATCC 49526 / WA1).